The chain runs to 3707 residues: CUB and sushi domain-containing protein 3 (3707 aa).

The tract at residues 1 to 21 (MKGIRKGESRAKESKPWEPGK) is disordered. Over 1-42 (MKGIRKGESRAKESKPWEPGKRRCAKCGRLDFILMKKMGIKS) the chain is Cytoplasmic. A helical transmembrane segment spans residues 43–63 (GFTFWNLVFLLTVSCVKGFIY). Over 64–3630 (TCGGTLKGLN…NQPHGTNSSS (3567 aa)) the chain is Extracellular. 4 disulfides stabilise this stretch: Cys65–Cys91, Cys178–Cys218, Cys204–Cys235, and Cys241–Cys267. One can recognise a CUB 1 domain in the interval 65 to 173 (CGGTLKGLNG…HGFKVYYEEL (109 aa)). N-linked (GlcNAc...) asparagine glycosylation is found at Asn73 and Asn90. Residues 176-237 (SSCGNPGVPP…WDFPVPICRA (62 aa)) enclose the Sushi 1 domain. The 105-residue stretch at 241–345 (CGGTMRGSSG…RGFSAPYQGS (105 aa)) folds into the CUB 2 domain. N-linked (GlcNAc...) asparagine glycosylation is found at Asn361 and Asn409. The interval 394-435 (QRVQVTSLRNSGLDPNTSKDGLSPHPADTQSTRRRPRHAEQI) is disordered. Over residues 396-413 (VQVTSLRNSGLDPNTSKD) the composition is skewed to polar residues. Residues 484–545 (NLCPDPGEPE…WSDHRPVCKV (62 aa)) form the Sushi 2 domain. 6 cysteine pairs are disulfide-bonded: Cys486–Cys526, Cys512–Cys543, Cys548–Cys574, Cys664–Cys704, Cys690–Cys717, and Cys721–Cys747. The region spanning 548-659 (CGSNLQGPSG…VGFKVNYKEI (112 aa)) is the CUB 3 domain. In terms of domain architecture, Sushi 3 spans 662-719 (ESCGDPGTPLYGIREGDGFSNRDVLRFECQFGFELIGEKSIVCQENNQWSANIPICIF). The CUB 4 domain maps to 721–829 (CLSNFTAPMG…RGFNITYNTF (109 aa)). 2 N-linked (GlcNAc...) asparagine glycosylation sites follow: Asn724 and Asn823. Residues 832–893 (NECPDPGIPI…WSGLIPKCGA (62 aa)) enclose the Sushi 4 domain. 3 disulfides stabilise this stretch: Cys834/Cys875, Cys860/Cys891, and Cys895/Cys921. A CUB 5 domain is found at 895–1003 (CGGHFSAPSG…NGFKIHYESV (109 aa)). N-linked (GlcNAc...) asparagine glycosylation occurs at Asn966. In terms of domain architecture, Sushi 5 spans 1008-1065 (YSCLDPGIPVHGRRYGHDFSIGSTVSFSCDSGYRLSHEEPLLCEKNHWWSHPLPTCDA). 3 disulfides stabilise this stretch: Cys1010–Cys1050, Cys1036–Cys1063, and Cys1067–Cys1093. One can recognise a CUB 6 domain in the interval 1067 to 1177 (CGGDVRGPSG…EGFNITFSEY (111 aa)). Residues Asn1092, Asn1126, and Asn1171 are each glycosylated (N-linked (GlcNAc...) asparagine). One can recognise a Sushi 6 domain in the interval 1180-1239 (EPCEDPGIPQYGSRIGFNFGIGDTLTFSCSSGYRLEGTSEIICLGGGRRVWSAPLPRCVA). Disulfide bonds link Cys1182/Cys1222, Cys1208/Cys1237, and Cys1241/Cys1267. The 109-residue stretch at 1241–1349 (CGASATNNEG…EGFQLVYTSF (109 aa)) folds into the CUB 7 domain. N-linked (GlcNAc...) asparagine glycosylation occurs at Asn1280. The Sushi 7 domain occupies 1352–1412 (SHCEDPGIPQ…WDYPLPSCIA (61 aa)). Cystine bridges form between Cys1354/Cys1395, Cys1381/Cys1410, Cys1414/Cys1441, Cys1528/Cys1568, Cys1554/Cys1584, Cys1588/Cys1614, Cys1701/Cys1741, Cys1727/Cys1758, Cys1762/Cys1788, Cys1878/Cys1918, Cys1904/Cys1935, and Cys1939/Cys1965. Residues 1414–1523 (CGGRFKGESS…SGFAIQFSSS (110 aa)) enclose the CUB 8 domain. Positions 1526–1586 (TACRDPGVPM…WQPSPPVCIA (61 aa)) constitute a Sushi 8 domain. N-linked (GlcNAc...) asparagine glycosylation is present at Asn1536. Residues 1588-1696 (CGGNLTGSSG…TGFHLEYKAK (109 aa)) form the CUB 9 domain. 2 N-linked (GlcNAc...) asparagine glycosylation sites follow: Asn1591 and Asn1709. In terms of domain architecture, Sushi 9 spans 1699-1760 (ESCFDPGNIM…WNRALPSCHA (62 aa)). In terms of domain architecture, CUB 10 spans 1762 to 1870 (CGSRSTGSEG…KGFHFVYQAV (109 aa)). Asn1781 carries an N-linked (GlcNAc...) asparagine glycan. Residues 1876 to 1937 (TQCSSVPEPR…WNDSLPTCIV (62 aa)) form the Sushi 10 domain. N-linked (GlcNAc...) asparagine glycosylation occurs at Asn1929. In terms of domain architecture, CUB 11 spans 1939-2047 (CGGILTKRKG…AGFHLEYTAI (109 aa)). Asn2019 carries an N-linked (GlcNAc...) asparagine glycan. The region spanning 2050–2109 (DSCPEPQTPSSGIKIGDRYMVGDVVSFQCDQGYSLQGHSHITCMPGPVRRWNYPIPICLA) is the Sushi 11 domain. Intrachain disulfides connect Cys2052-Cys2092, Cys2078-Cys2107, and Cys2111-Cys2137. One can recognise a CUB 12 domain in the interval 2111-2219 (CGGAMSDFSG…QGFHIVYQAY (109 aa)). A glycan (N-linked (GlcNAc...) asparagine) is linked at Asn2155. A Sushi 12 domain is found at 2222–2281 (QSCPDPRPFRNGFVIGNDFTVGQTISFECFPGYTLIGNSALTCLHGVSRNWNHPLPRCEA). 3 cysteine pairs are disulfide-bonded: Cys2224–Cys2264, Cys2250–Cys2279, and Cys2283–Cys2309. Residues 2283–2394 (CGGNITAMNG…LSYHAYQLRV (112 aa)) form the CUB 13 domain. Asn2286, Asn2291, and Asn2324 each carry an N-linked (GlcNAc...) asparagine glycan. The Sushi 13 domain occupies 2393–2454 (RVCQPPPPVP…MDGAPPVCQV (62 aa)). 3 cysteine pairs are disulfide-bonded: Cys2395–Cys2437, Cys2423–Cys2452, and Cys2456–Cys2484. Residues 2456 to 2567 (CPANELRLDS…KGFRIRYIAF (112 aa)) form the CUB 14 domain. N-linked (GlcNAc...) asparagine glycans are attached at residues Asn2495 and Asn2537. 15 consecutive Sushi domains span residues 2567 to 2629 (FYCS…ACQA), 2630 to 2691 (ISCG…RCVV), 2692 to 2756 (VTCP…YCQI), 2757 to 2814 (ISCG…RCLA), 2815 to 2872 (GHCG…SCVP), 2873 to 2930 (VSCG…MCKV), 2931 to 2992 (VNCS…ECIM), 2993 to 3050 (IDCG…HCSG), 3054 to 3111 (GTCG…ECKA), 3112 to 3170 (VQCG…NCTI), 3171 to 3230 (ISCG…TCRA), 3231 to 3288 (VTCP…QCLP), 3289 to 3346 (KFCG…HCIE), 3350 to 3408 (TSCE…ECIP), and 3409 to 3468 (HSCK…ICEA). 12 disulfide bridges follow: Cys2569–Cys2610, Cys2596–Cys2627, Cys2632–Cys2674, Cys2658–Cys2689, Cys2694–Cys2739, Cys2725–Cys2754, Cys2759–Cys2799, Cys2785–Cys2812, Cys2817–Cys2857, Cys2843–Cys2870, Cys2875–Cys2915, and Cys2901–Cys2928. 2 N-linked (GlcNAc...) asparagine glycosylation sites follow: Asn2711 and Asn2742. Asn2862 carries N-linked (GlcNAc...) asparagine glycosylation. N-linked (GlcNAc...) asparagine glycosylation is found at Asn2932 and Asn2952. Cystine bridges form between Cys2933–Cys2977, Cys2963–Cys2990, Cys2995–Cys3035, Cys3021–Cys3048, Cys3056–Cys3096, Cys3082–Cys3109, Cys3114–Cys3155, Cys3141–Cys3168, Cys3173–Cys3215, Cys3199–Cys3228, Cys3233–Cys3273, Cys3259–Cys3286, Cys3291–Cys3331, Cys3317–Cys3344, Cys3352–Cys3393, Cys3379–Cys3406, Cys3411–Cys3453, and Cys3438–Cys3466. Residue Asn3099 is glycosylated (N-linked (GlcNAc...) asparagine). Residues Asn3158, Asn3167, Asn3194, Asn3208, and Asn3218 are each glycosylated (N-linked (GlcNAc...) asparagine). Asn3276 carries N-linked (GlcNAc...) asparagine glycosylation. Asn3364 is a glycosylation site (N-linked (GlcNAc...) asparagine). N-linked (GlcNAc...) asparagine glycans are attached at residues Asn3522, Asn3529, Asn3612, Asn3618, and Asn3627. The chain crosses the membrane as a helical span at residues 3631–3651 (VAIAILVPFFALIFAGFGFYL). The Cytoplasmic segment spans residues 3652–3707 (YKQRTAPKTQYTGCSVHENNNGQAAFENPMYDTNAKSVEGKAVRFDPNLNTVCTMV).

The protein belongs to the CSMD family. In terms of tissue distribution, weakly expressed in most tissues, except in brain. Expressed at intermediate level in brain, including cerebellum, substantia nigra, thalamus, spinal cord, hippocampus and fetal brain. Also expressed in testis.

The protein localises to the cell membrane. Involved in dendrite development. The polypeptide is CUB and sushi domain-containing protein 3 (CSMD3) (Homo sapiens (Human)).